The following is a 505-amino-acid chain: Glutamate--tRNA ligase (505 aa).

Residues 12-22 carry the 'HIGH' region motif; sequence PSPTGALHIGG. The 'KMSKS' region motif lies at 260–264; it reads KLSKR. Lysine 263 contributes to the ATP binding site.

The protein belongs to the class-I aminoacyl-tRNA synthetase family. Glutamate--tRNA ligase type 1 subfamily. Monomer.

It is found in the cytoplasm. The catalysed reaction is tRNA(Glu) + L-glutamate + ATP = L-glutamyl-tRNA(Glu) + AMP + diphosphate. Catalyzes the attachment of glutamate to tRNA(Glu) in a two-step reaction: glutamate is first activated by ATP to form Glu-AMP and then transferred to the acceptor end of tRNA(Glu). The protein is Glutamate--tRNA ligase of Bacteroides fragilis (strain ATCC 25285 / DSM 2151 / CCUG 4856 / JCM 11019 / LMG 10263 / NCTC 9343 / Onslow / VPI 2553 / EN-2).